Here is a 125-residue protein sequence, read N- to C-terminus: uncharacterized protein (125 aa).

This is an uncharacterized protein from Pasteurella multocida (strain Pm70).